A 235-amino-acid polypeptide reads, in one-letter code: Phosphoribosylaminoimidazole-succinocarboxamide synthase (235 aa).

It belongs to the SAICAR synthetase family.

The enzyme catalyses 5-amino-1-(5-phospho-D-ribosyl)imidazole-4-carboxylate + L-aspartate + ATP = (2S)-2-[5-amino-1-(5-phospho-beta-D-ribosyl)imidazole-4-carboxamido]succinate + ADP + phosphate + 2 H(+). Its pathway is purine metabolism; IMP biosynthesis via de novo pathway; 5-amino-1-(5-phospho-D-ribosyl)imidazole-4-carboxamide from 5-amino-1-(5-phospho-D-ribosyl)imidazole-4-carboxylate: step 1/2. The chain is Phosphoribosylaminoimidazole-succinocarboxamide synthase from Chlorobium chlorochromatii (strain CaD3).